The sequence spans 233 residues: Aspartate/glutamate leucyltransferase (233 aa).

It belongs to the R-transferase family. Bpt subfamily.

The protein localises to the cytoplasm. It catalyses the reaction N-terminal L-glutamyl-[protein] + L-leucyl-tRNA(Leu) = N-terminal L-leucyl-L-glutamyl-[protein] + tRNA(Leu) + H(+). It carries out the reaction N-terminal L-aspartyl-[protein] + L-leucyl-tRNA(Leu) = N-terminal L-leucyl-L-aspartyl-[protein] + tRNA(Leu) + H(+). Functions in the N-end rule pathway of protein degradation where it conjugates Leu from its aminoacyl-tRNA to the N-termini of proteins containing an N-terminal aspartate or glutamate. This chain is Aspartate/glutamate leucyltransferase, found in Vibrio campbellii (strain ATCC BAA-1116).